A 450-amino-acid polypeptide reads, in one-letter code: tRNA modification GTPase MnmE (450 aa).

Residues arginine 23, glutamate 79, and lysine 118 each contribute to the (6S)-5-formyl-5,6,7,8-tetrahydrofolate site. Positions 214–374 (GITLILVGKP…LKEHILNKVG (161 aa)) constitute a TrmE-type G domain. Residue asparagine 224 coordinates K(+). GTP contacts are provided by residues 224 to 229 (NAGKSS), 243 to 249 (TSIAGTT), and 268 to 271 (DTAG). Serine 228 is a Mg(2+) binding site. K(+) contacts are provided by threonine 243, isoleucine 245, and threonine 248. Threonine 249 contacts Mg(2+). Lysine 450 lines the (6S)-5-formyl-5,6,7,8-tetrahydrofolate pocket.

Belongs to the TRAFAC class TrmE-Era-EngA-EngB-Septin-like GTPase superfamily. TrmE GTPase family. As to quaternary structure, homodimer. Heterotetramer of two MnmE and two MnmG subunits. It depends on K(+) as a cofactor.

It localises to the cytoplasm. Exhibits a very high intrinsic GTPase hydrolysis rate. Involved in the addition of a carboxymethylaminomethyl (cmnm) group at the wobble position (U34) of certain tRNAs, forming tRNA-cmnm(5)s(2)U34. In Francisella tularensis subsp. holarctica (strain FTNF002-00 / FTA), this protein is tRNA modification GTPase MnmE.